Reading from the N-terminus, the 356-residue chain is Dual-specificity RNA methyltransferase RlmN (356 aa).

Glu-89 acts as the Proton acceptor in catalysis. A Radical SAM core domain is found at 108 to 341; sequence SHARYTICVS…CTIRESKGLD (234 aa). Residues Cys-115 and Cys-346 are joined by a disulfide bond. [4Fe-4S] cluster contacts are provided by Cys-122, Cys-126, and Cys-129. Residues 172 to 173, Ser-204, 227 to 229, and Asn-303 contribute to the S-adenosyl-L-methionine site; these read GE and SLH. Catalysis depends on Cys-346, which acts as the S-methylcysteine intermediate.

This sequence belongs to the radical SAM superfamily. RlmN family. [4Fe-4S] cluster serves as cofactor.

The protein localises to the cytoplasm. The catalysed reaction is adenosine(2503) in 23S rRNA + 2 reduced [2Fe-2S]-[ferredoxin] + 2 S-adenosyl-L-methionine = 2-methyladenosine(2503) in 23S rRNA + 5'-deoxyadenosine + L-methionine + 2 oxidized [2Fe-2S]-[ferredoxin] + S-adenosyl-L-homocysteine. The enzyme catalyses adenosine(37) in tRNA + 2 reduced [2Fe-2S]-[ferredoxin] + 2 S-adenosyl-L-methionine = 2-methyladenosine(37) in tRNA + 5'-deoxyadenosine + L-methionine + 2 oxidized [2Fe-2S]-[ferredoxin] + S-adenosyl-L-homocysteine. Specifically methylates position 2 of adenine 2503 in 23S rRNA and position 2 of adenine 37 in tRNAs. m2A2503 modification seems to play a crucial role in the proofreading step occurring at the peptidyl transferase center and thus would serve to optimize ribosomal fidelity. The protein is Dual-specificity RNA methyltransferase RlmN of Campylobacter jejuni subsp. jejuni serotype O:23/36 (strain 81-176).